The chain runs to 707 residues: Eomesodermin homolog (707 aa).

Gly residues predominate over residues 27 to 42 (GGGGGGGGGGGGGGGS). The interval 27 to 125 (GGGGGGGGGG…GSPCAEEELP (99 aa)) is disordered. Over residues 73 to 93 (AGSAEPAGAGAGAPAAMLSDA) the composition is skewed to low complexity. Ser117 carries the phosphoserine modification. Residues 278–458 (LWLKFHRHQT…HNPFAKGFRD (181 aa)) constitute a DNA-binding region (T-box). Position 473 is a phosphothreonine (Thr473). Positions 592–707 (AMAGWGGRGA…GAYYAFYTSP (116 aa)) are required for transcription activation. Residues 642-689 (TPPSIKSLDSSDSGVYNSACKRKRLSPSTPSNGNSPPIKCEDINTEEY) form a disordered region. The span at 648–657 (SLDSSDSGVY) shows a compositional bias: polar residues. A compositionally biased stretch (low complexity) spans 667–678 (SPSTPSNGNSPP). A compositionally biased stretch (basic and acidic residues) spans 680 to 689 (KCEDINTEEY).

As to expression, expressed in CD8+ T-cells.

Its subcellular location is the nucleus. In terms of biological role, functions as a transcriptional activator playing a crucial role during development. Functions in trophoblast differentiation and later in gastrulation, regulating both mesoderm delamination and endoderm specification. Plays a role in brain development being required for the specification and the proliferation of the intermediate progenitor cells and their progeny in the cerebral cortex. Required for differentiation and migration of unipolar dendritic brush cells. Also involved in the differentiation of CD8+ T-cells during immune response regulating the expression of lytic effector genes. The sequence is that of Eomesodermin homolog (Eomes) from Mus musculus (Mouse).